A 379-amino-acid chain; its full sequence is Alcohol dehydrogenase class-3 (379 aa).

Zn(2+) contacts are provided by Cys47, His69, Cys99, Cys102, Cys105, Cys113, and Cys176.

It belongs to the zinc-containing alcohol dehydrogenase family. Class-III subfamily. In terms of assembly, homodimer. Zn(2+) serves as cofactor.

The protein resides in the cytoplasm. The catalysed reaction is a primary alcohol + NAD(+) = an aldehyde + NADH + H(+). It catalyses the reaction a secondary alcohol + NAD(+) = a ketone + NADH + H(+). The enzyme catalyses S-(hydroxymethyl)glutathione + NADP(+) = S-formylglutathione + NADPH + H(+). It carries out the reaction S-(hydroxymethyl)glutathione + NAD(+) = S-formylglutathione + NADH + H(+). In terms of biological role, class-III ADH is remarkably ineffective in oxidizing ethanol, but it readily catalyzes the oxidation of long-chain primary alcohols and the oxidation of S-(hydroxymethyl) glutathione. This chain is Alcohol dehydrogenase class-3 (adh5), found in Dictyostelium discoideum (Social amoeba).